The sequence spans 394 residues: Elongation factor Tu 2 (394 aa).

Residues 10–204 (KPHVNVGTIG…HLDTYIPEPE (195 aa)) form the tr-type G domain. A G1 region spans residues 19-26 (GHVDHGKT). 19-26 (GHVDHGKT) is a GTP binding site. Threonine 26 provides a ligand contact to Mg(2+). The tract at residues 60–64 (GITIN) is G2. Positions 81–84 (DCPG) are G3. GTP-binding positions include 81 to 85 (DCPGH) and 136 to 139 (NKCD). Positions 136-139 (NKCD) are G4. A G5 region spans residues 174 to 176 (SAL).

It belongs to the TRAFAC class translation factor GTPase superfamily. Classic translation factor GTPase family. EF-Tu/EF-1A subfamily. Monomer.

The protein resides in the cytoplasm. It carries out the reaction GTP + H2O = GDP + phosphate + H(+). Its function is as follows. GTP hydrolase that promotes the GTP-dependent binding of aminoacyl-tRNA to the A-site of ribosomes during protein biosynthesis. The polypeptide is Elongation factor Tu 2 (Haemophilus influenzae (strain 86-028NP)).